A 696-amino-acid chain; its full sequence is MSRKILVTSALPYANGAIHLGHLVEYIQTDIWVRFQKMSGNECWYVCADDTHGTPIMLRAEKEGITPEQLIARVHGEHSRDFAGFHVGFDNYYSTHSDETRDCANDIYLKLRAAGLIETRTIEQYYDPVKQLFLPDRFIKGECPKCGAKDQYGDNCESCGAAYAPTDLKEPYSAISGAKPELRTSEHYFFKLSDPRCEAFLRQYTSRDNGVLQNEAANKMQEWLGAPGENKLTDWDISRDAPYFGFEIPDAPGKYFYVWLDAPIGYMGSFKNLCARNGLDFNEYFKPDAKTELYHFIGKDILYFHALFWPAELAHAGFRTPTKIFAHGFLTVDGAKMSKSRGTFITAESFLKTGLNPEWLRYYYAAKLSATMEDIDLSLDDFVARVNSDLVGKYVNIASRSAGFITKRFNGQLAPATAELPAIKGIQEAASRIAELYEAREFGKAMREIMALTDAANQYVDSVKPWELAKQEGKEVELHAACTNALNLFRLLTVLLKPILPIVAEKVEKFLNIAPLHWADTQSLLAGGHAINAYEHLMTRVDPKLIEKLVEANKESLAPAPEAQSQQRHAEHQQNEVTAESPWEPFCNIDDFMKVDLRIVRIANAEHVEGADKLVRLTLDVGNNETRNVFAGIKAAYDPAQLIGRLTVMVANLAPRKMKFGLSEGMVLAASDGEGKTPGIFLLSPDSGAQPGMRVK.

The 'HIGH' region signature appears at 12–22 (PYANGAIHLGH). Positions 143, 146, 156, and 159 each coordinate Zn(2+). Residues 336-340 (KMSKS) carry the 'KMSKS' region motif. Lysine 339 provides a ligand contact to ATP. A disordered region spans residues 556–580 (SLAPAPEAQSQQRHAEHQQNEVTAE). The tRNA-binding domain maps to 591–696 (DFMKVDLRIV…SGAQPGMRVK (106 aa)).

It belongs to the class-I aminoacyl-tRNA synthetase family. MetG type 1 subfamily. In terms of assembly, homodimer. Zn(2+) serves as cofactor.

It localises to the cytoplasm. It catalyses the reaction tRNA(Met) + L-methionine + ATP = L-methionyl-tRNA(Met) + AMP + diphosphate. Its function is as follows. Is required not only for elongation of protein synthesis but also for the initiation of all mRNA translation through initiator tRNA(fMet) aminoacylation. This is Methionine--tRNA ligase from Dechloromonas aromatica (strain RCB).